The primary structure comprises 769 residues: Disintegrin and metalloproteinase domain-containing protein 11 (769 aa).

The signal sequence occupies residues 1–23; sequence MRLLRRWAFAALLLSLLPTPGLG. A propeptide spanning residues 24 to 225 is cleaved from the precursor; sequence TQGPAGALRW…PNRPRLRRKR (202 aa). A disordered region spans residues 40-78; sequence GGPGAPEVTEPSRLVRESSGGEVRKQQLDTRVRQEPPGG. A compositionally biased stretch (basic and acidic residues) spans 61-73; the sequence is EVRKQQLDTRVRQ. N-linked (GlcNAc...) asparagine glycosylation is found at N96 and N163. The Extracellular segment spans residues 226-734; it reads QVRRGHPTVH…ERYKGPSGTN (509 aa). In terms of domain architecture, Peptidase M12B spans 239–438; that stretch reads KYVELIVIND…GGGSCLFNKP (200 aa). The required for localization to cerebellar cortex basket cell terminals. Also required for localization of KCNA1, KCNA2, DLG4 and ADAM22 to cerebellar cortex basket cell terminal perisomatic axons and pinceaux stretch occupies residues 332–769; it reads GRTFQSTSSG…NIRRGRSGGA (438 aa). 4 disulfide bridges follow: C349-C433, C392-C417, C394-C401, and C503-C523. Residues 444 to 531 enclose the Disintegrin domain; that stretch reads PPECGNGFVE…QCPPNLHKLD (88 aa). 2 N-linked (GlcNAc...) asparagine glycosylation sites follow: N605 and N673. 3 disulfides stabilise this stretch: C677–C692, C686–C698, and C700–C709. Residues 677-709 enclose the EGF-like domain; sequence CPGSGERRICSHHGVCSNEGKCICQPDWTGKDC. A helical transmembrane segment spans residues 735-755; it reads IIIGSIAGAVLVAAIVLGGTG. Residues 756 to 769 are Cytoplasmic-facing; it reads WGFKNIRRGRSGGA.

In terms of assembly, interacts with LGI1 and LGI4. Interacts with KCNA1/KV1.1, KCNA2/KV1.2, DLG4/PSD-95 and ADAM22. In terms of processing, the precursor is cleaved by a furin endopeptidase. In terms of tissue distribution, expressed predominantly in brain. Slightly detected or not at all in other tissues.

It localises to the presynaptic cell membrane. It is found in the perikaryon. Its subcellular location is the cell projection. The protein localises to the axon. In terms of biological role, probable ligand for integrin in the brain. This is a non catalytic metalloprotease-like protein. Required for localization of the potassium channel subunit proteins KCNA1/KV1.1 and KCNA2/KV1.2 at cerebellar cortex basket cell distal terminals, is thereby involved in ephaptic inhibitory synchronization of Purkinje cell firing and response to stress. Plays a role in spatial learning and motor coordination. Involved in the nociceptive pain response to chemical-derived stimulation. The polypeptide is Disintegrin and metalloproteinase domain-containing protein 11 (ADAM11) (Homo sapiens (Human)).